The following is an 81-amino-acid chain: Centromere protein X (81 aa).

Methionine 1 carries the post-translational modification N-acetylmethionine.

This sequence belongs to the CENP-X/MHF2 family. In terms of assembly, heterodimer with CENPX, sometimes called MHF; this interaction stabilizes both partners. MHF heterodimers can assemble to form tetrameric structures. MHF also coassemble with CENPT-CENPW heterodimers at centromeres to form the tetrameric CENP-T-W-S-X complex. Forms a discrete complex with FANCM and CENPX, called FANCM-MHF; this interaction, probably mediated by direct binding between CENPS and FANCM, leads to synergistic activation of double-stranded DNA binding and strongly stimulates FANCM-mediated DNA remodeling. Recruited by FANCM to the Fanconi anemia (FA) core complex, which consists of CENPS, CENPX, FANCA, FANCB, FANCC, FANCE, FANCF, FANCG, FANCL, FANCM, FAAP24 and FAAP100. The FA core complex associates with Bloom syndrome (BLM) complex, which consists of at least BLM, DNA topoisomerase 3-alpha (TOP3A), RMI1/BLAP75, RPA1/RPA70 and RPA2/RPA32. The super complex between FA and BLM is called BRAFT.

The protein localises to the nucleus. Its subcellular location is the chromosome. It is found in the centromere. The protein resides in the kinetochore. DNA-binding component of the Fanconi anemia (FA) core complex. Required for the normal activation of the FA pathway, leading to monoubiquitination of the FANCI-FANCD2 complex in response to DNA damage, cellular resistance to DNA cross-linking drugs, and prevention of chromosomal breakage. In complex with CENPS (MHF heterodimer), crucial cofactor for FANCM in both binding and ATP-dependent remodeling of DNA. Stabilizes FANCM. In complex with CENPS and FANCM (but not other FANC proteins), rapidly recruited to blocked forks and promotes gene conversion at blocked replication forks. In complex with CENPS, CENPT and CENPW (CENP-T-W-S-X heterotetramer), involved in the formation of a functional kinetochore outer plate, which is essential for kinetochore-microtubule attachment and faithful mitotic progression. As a component of MHF and CENP-T-W-S-X complexes, binds DNA and bends it to form a nucleosome-like structure. DNA-binding function is fulfilled in the presence of CENPS, with the following preference for DNA substates: Holliday junction &gt; double-stranded &gt; splay arm &gt; single-stranded. Does not bind DNA on its own. The polypeptide is Centromere protein X (CENPX) (Homo sapiens (Human)).